We begin with the raw amino-acid sequence, 170 residues long: Urease accessory protein UreE (170 aa).

Positions Gly144–Asp170 are disordered. Residues His146–His162 show a composition bias toward basic and acidic residues.

This sequence belongs to the UreE family.

The protein resides in the cytoplasm. Involved in urease metallocenter assembly. Binds nickel. Probably functions as a nickel donor during metallocenter assembly. This chain is Urease accessory protein UreE, found in Brucella anthropi (strain ATCC 49188 / DSM 6882 / CCUG 24695 / JCM 21032 / LMG 3331 / NBRC 15819 / NCTC 12168 / Alc 37) (Ochrobactrum anthropi).